A 1613-amino-acid polypeptide reads, in one-letter code: NAD-specific glutamate dehydrogenase (1613 aa).

Lys849 is a catalytic residue.

This sequence belongs to the Glu/Leu/Phe/Val dehydrogenases family.

It catalyses the reaction L-glutamate + NAD(+) + H2O = 2-oxoglutarate + NH4(+) + NADH + H(+). Involved in arginine catabolism by converting L-glutamate, into 2-oxoglutarate, which is then channeled into the tricarboxylic acid cycle. This Halomonas elongata (strain ATCC 33173 / DSM 2581 / NBRC 15536 / NCIMB 2198 / 1H9) protein is NAD-specific glutamate dehydrogenase.